The following is a 246-amino-acid chain: Ribonuclease 3 (246 aa).

One can recognise an RNase III domain in the interval 10-143 (LERLEQALDY…LLGAIYLDGG (134 aa)). Glu-56 contributes to the Mg(2+) binding site. Asp-60 is a catalytic residue. The Mg(2+) site is built by Asn-129 and Glu-132. Residue Glu-132 is part of the active site. The DRBM domain occupies 170-239 (DYKTLLQEYL…AQQALELLIE (70 aa)).

This sequence belongs to the ribonuclease III family. Homodimer. Mg(2+) is required as a cofactor.

The protein resides in the cytoplasm. It catalyses the reaction Endonucleolytic cleavage to 5'-phosphomonoester.. Functionally, digests double-stranded RNA. Involved in the processing of primary rRNA transcript to yield the immediate precursors to the large and small rRNAs (23S and 16S). Processes some mRNAs, and tRNAs when they are encoded in the rRNA operon. Processes pre-crRNA and tracrRNA of type II CRISPR loci if present in the organism. This Magnetococcus marinus (strain ATCC BAA-1437 / JCM 17883 / MC-1) protein is Ribonuclease 3.